The primary structure comprises 134 residues: Thionin-2.1 (134 aa).

A signal peptide spans 1-24; sequence MKGRILILSLLIMSLVMAQVQVEA. Disulfide bonds link C27–C61, C28–C55, and C40–C49. Positions 68 to 134 are cleaved as a propeptide — acidic domain; that stretch reads AILENSADAT…VVPPGPPKLL (67 aa).

Belongs to the plant thionin (TC 1.C.44) family. As to expression, detected in rosette leaves and at a very high level in flowers and in siliques.

The protein resides in the secreted. Its function is as follows. Seems to function as a defense factor. Thionins are small plant proteins which are toxic to animal cells. They seem to exert their toxic effect at the level of the cell membrane. Their precise function is not known. This Arabidopsis thaliana (Mouse-ear cress) protein is Thionin-2.1 (THI2.1).